Reading from the N-terminus, the 224-residue chain is Deoxyribose-phosphate aldolase (224 aa).

Aspartate 92 (proton donor/acceptor) is an active-site residue. The active-site Schiff-base intermediate with acetaldehyde is the lysine 154. Lysine 183 functions as the Proton donor/acceptor in the catalytic mechanism.

Belongs to the DeoC/FbaB aldolase family. DeoC type 1 subfamily.

The protein localises to the cytoplasm. It carries out the reaction 2-deoxy-D-ribose 5-phosphate = D-glyceraldehyde 3-phosphate + acetaldehyde. Its pathway is carbohydrate degradation; 2-deoxy-D-ribose 1-phosphate degradation; D-glyceraldehyde 3-phosphate and acetaldehyde from 2-deoxy-alpha-D-ribose 1-phosphate: step 2/2. In terms of biological role, catalyzes a reversible aldol reaction between acetaldehyde and D-glyceraldehyde 3-phosphate to generate 2-deoxy-D-ribose 5-phosphate. This Mannheimia succiniciproducens (strain KCTC 0769BP / MBEL55E) protein is Deoxyribose-phosphate aldolase.